Consider the following 118-residue polypeptide: Small ribosomal subunit protein eS24 (118 aa).

It belongs to the eukaryotic ribosomal protein eS24 family.

The sequence is that of Small ribosomal subunit protein eS24 from Sulfolobus acidocaldarius (strain ATCC 33909 / DSM 639 / JCM 8929 / NBRC 15157 / NCIMB 11770).